Reading from the N-terminus, the 324-residue chain is MSIRVGIVGISGFGGGEAMRLVAGHPSFELVYAAGEGSAGQRLAERFPGVPAKLADLVIEKWDPARLPSLDVLFASLPTGASRDALARVPDDVKIVDIGGDHRYADGWTYGLADVWPQEIASKTRIANPGCFPAAALTPLAPLLADKLISPDTIVIDAKTGISGAGRGGGTGFGYAESNENLIPYGLLRHVHMPEIERSIARISGGSATGLVFTPHLVPMTRGILATIYARGRATTAQCLDAARRFYEGSAFVRVTDKPPQTKWAAGSNLAFVSYAADPERNLVIALGVVDNLGKGAAGQAVQNANLMCGLPETAGLEGAPVWP.

Cys131 is an active-site residue.

Belongs to the NAGSA dehydrogenase family. Type 1 subfamily.

The protein localises to the cytoplasm. It carries out the reaction N-acetyl-L-glutamate 5-semialdehyde + phosphate + NADP(+) = N-acetyl-L-glutamyl 5-phosphate + NADPH + H(+). It functions in the pathway amino-acid biosynthesis; L-arginine biosynthesis; N(2)-acetyl-L-ornithine from L-glutamate: step 3/4. Catalyzes the NADPH-dependent reduction of N-acetyl-5-glutamyl phosphate to yield N-acetyl-L-glutamate 5-semialdehyde. The polypeptide is N-acetyl-gamma-glutamyl-phosphate reductase (Bradyrhizobium sp. (strain BTAi1 / ATCC BAA-1182)).